The following is a 422-amino-acid chain: BTB/POZ domain-containing protein KCTD18 (422 aa).

The 69-residue stretch at 12–80 folds into the BTB domain; it reads DILRLNVGGC…YLHGEVHIPT (69 aa). Disordered regions lie at residues 289–357 and 376–422; these read VKNS…THLP and LRRT…DQTK. The segment covering 396–406 has biased composition (pro residues); the sequence is PAGPPEPPPDA. The span at 413-422 shows a compositional bias: polar residues; the sequence is WTENGQDQTK.

This is BTB/POZ domain-containing protein KCTD18 (KCTD18) from Bos taurus (Bovine).